The primary structure comprises 469 residues: Alpha-2C adrenergic receptor (469 aa).

The segment at 1–29 (MDLQLTTNSTDSGDRGGSSNESLQRQPPS) is disordered. Residues 1–36 (MDLQLTTNSTDSGDRGGSSNESLQRQPPSQYSPAEV) lie on the Extracellular side of the membrane. 2 N-linked (GlcNAc...) asparagine glycosylation sites follow: N8 and N20. The chain crosses the membrane as a helical span at residues 37-62 (AGLAAVVSFLIVFTIVGNVLVVIAVL). At 63–73 (TSRALKAPQNL) the chain is on the cytoplasmic side. Residues 74–99 (FQVSLASADILVATLVMPFSLANELM) traverse the membrane as a helical segment. Residues 100-109 (NYWYFGKVWC) lie on the Extracellular side of the membrane. A disulfide bridge links C109 with C187. A helical transmembrane segment spans residues 110–132 (VIYLALDVLFCTSSIVHLCAISL). Topologically, residues 133-154 (DRYWSVTQAVEYNLKRTPRRIK) are cytoplasmic. Residues 155 to 175 (GIIVTVWLISAVISFPPLISL) traverse the membrane as a helical segment. At 176-194 (YRDPEDDLYPQCELNDETW) the chain is on the extracellular side. Residues 195-216 (YILSSCIGSFFAPCIIMVLVYV) form a helical membrane-spanning segment. Residues 217 to 386 (RIYRVAKLRT…RKVTQAREKR (170 aa)) are Cytoplasmic-facing. 2 disordered regions span residues 232–261 (KRTV…AAAA) and 279–353 (HHHH…SRLS). Residues 279 to 296 (HHHHHLHHHHHHHHHQLR) show a composition bias toward basic residues. The span at 301 to 310 (LEDIELEESS) shows a compositional bias: acidic residues. Positions 331–353 (RGFSFSFSSTKGGQSAGAGSRLS) are enriched in low complexity. The helical transmembrane segment at 387 to 407 (FTFVLAVVMGVFVVCWFPFFF) threads the bilayer. Topologically, residues 408–427 (TYSLYGICREACQVPETLFK) are extracellular. The helical transmembrane segment at 428 to 448 (FFFWIGYCNSSLNPVIYTIFN) threads the bilayer. The Cytoplasmic portion of the chain corresponds to 449 to 469 (QDFRRSFKHILFKKKKKTSLQ).

It belongs to the G-protein coupled receptor 1 family. Adrenergic receptor subfamily. ADRA2C sub-subfamily.

Its subcellular location is the cell membrane. In terms of biological role, alpha-2 adrenergic receptors mediate the catecholamine-induced inhibition of adenylate cyclase through the action of G proteins. This chain is Alpha-2C adrenergic receptor (ADRA2C), found in Didelphis virginiana (North American opossum).